We begin with the raw amino-acid sequence, 124 residues long: Small ribosomal subunit protein uS12 (124 aa).

Positions 1–20 (MPTIQQLVRKGRTPKVVKTK) are disordered. Over residues 9–18 (RKGRTPKVVK) the composition is skewed to basic residues. Residue Asp89 is modified to 3-methylthioaspartic acid.

The protein belongs to the universal ribosomal protein uS12 family. Part of the 30S ribosomal subunit. Contacts proteins S8 and S17. May interact with IF1 in the 30S initiation complex.

In terms of biological role, with S4 and S5 plays an important role in translational accuracy. Its function is as follows. Interacts with and stabilizes bases of the 16S rRNA that are involved in tRNA selection in the A site and with the mRNA backbone. Located at the interface of the 30S and 50S subunits, it traverses the body of the 30S subunit contacting proteins on the other side and probably holding the rRNA structure together. The combined cluster of proteins S8, S12 and S17 appears to hold together the shoulder and platform of the 30S subunit. The chain is Small ribosomal subunit protein uS12 from Clavibacter michiganensis subsp. michiganensis (strain NCPPB 382).